Consider the following 236-residue polypeptide: Ribosome maturation protein SDO1 homolog (236 aa).

Belongs to the SDO1/SBDS family. As to quaternary structure, crystallized in association with 70S ribosomes.

The sequence is that of Ribosome maturation protein SDO1 homolog from Thermococcus kodakarensis (strain ATCC BAA-918 / JCM 12380 / KOD1) (Pyrococcus kodakaraensis (strain KOD1)).